The following is a 251-amino-acid chain: Carboxy-S-adenosyl-L-methionine synthase (251 aa).

S-adenosyl-L-methionine contacts are provided by residues Tyr-48, 73 to 75, Asn-140, and Arg-207; that span reads GCS.

Belongs to the class I-like SAM-binding methyltransferase superfamily. Cx-SAM synthase family. As to quaternary structure, homodimer.

It catalyses the reaction prephenate + S-adenosyl-L-methionine = carboxy-S-adenosyl-L-methionine + 3-phenylpyruvate + H2O. Catalyzes the conversion of S-adenosyl-L-methionine (SAM) to carboxy-S-adenosyl-L-methionine (Cx-SAM). The sequence is that of Carboxy-S-adenosyl-L-methionine synthase from Hydrogenovibrio crunogenus (strain DSM 25203 / XCL-2) (Thiomicrospira crunogena).